Reading from the N-terminus, the 318-residue chain is Acyl-CoA dehydrogenase IpdE2 (318 aa).

FAD is bound by residues arginine 210 and glycine 277.

Belongs to the acyl-CoA dehydrogenase family. In terms of assembly, heterotetramer composed of 2 IpdE1 subunits and 2 IpdE2 subunits. FAD is required as a cofactor.

The enzyme catalyses 3-[(3aS,4S,5R,7aS)-5-hydroxy-7a-methyl-1-oxo-octahydro-1H-inden-4-yl]propanoyl-CoA + A = (2E)-3-[(3aS,4S,5R,7aS)-5-hydroxy-7a-methyl-1-oxo-octahydro-1H-inden-4-yl]prop-2-enoyl-CoA + AH2. Its pathway is steroid metabolism; cholesterol degradation. Involved in cholesterol degradation. Catalyzes the dehydrogenation of 5OH-HIP-CoA to 5OH-HIPE-CoA. Can also use octanoyl-CoA and dihydroferuloyl-CoA, with lower efficiency. Cannot use 3-oxo-4-pregnene-20-carboxyl-CoA (3-OPC-CoA). The polypeptide is Acyl-CoA dehydrogenase IpdE2 (Mycobacterium tuberculosis (strain ATCC 25618 / H37Rv)).